We begin with the raw amino-acid sequence, 531 residues long: UDP-glucuronosyltransferase 1A5 (531 aa).

The N-terminal stretch at methionine 1–glycine 25 is a signal peptide. Asparagine 116, asparagine 131, asparagine 139, asparagine 293, and asparagine 431 each carry an N-linked (GlcNAc...) asparagine glycan. The helical transmembrane segment at valine 489 to tyrosine 505 threads the bilayer.

The protein belongs to the UDP-glycosyltransferase family. Homodimer. Homooligomer. Interacts with UGT1A1, UGT1A3, UGT1A4, UGT1A6, UGT1A7, UGT1A8, UGT1A9 and UGT1A10 to form heterodimers.

The protein localises to the endoplasmic reticulum membrane. The catalysed reaction is glucuronate acceptor + UDP-alpha-D-glucuronate = acceptor beta-D-glucuronoside + UDP + H(+). It catalyses the reaction zolasartan + UDP-alpha-D-glucuronate = zolarsartan-1-N-beta-D-glucuronide + UDP. Its function is as follows. UDP-glucuronosyltransferase (UGT) that catalyzes phase II biotransformation reactions in which lipophilic substrates are conjugated with glucuronic acid to increase the metabolite's water solubility, thereby facilitating excretion into either the urine or bile. Essential for the elimination and detoxification of drugs, xenobiotics and endogenous compounds. Involved in the glucuronidation of the AGTR1 angiotensin receptor antagonist zolarsatan, a drug which can inhibit the effect of angiotensin II. This is UDP-glucuronosyltransferase 1A5 from Rattus norvegicus (Rat).